The following is a 938-amino-acid chain: Isoleucine--tRNA ligase (938 aa).

The 'HIGH' region motif lies at 58-68 (PYANGNIHIGH). Residue Glu561 coordinates L-isoleucyl-5'-AMP. The short motif at 602-606 (KMSKS) is the 'KMSKS' region element. Lys605 contributes to the ATP binding site. 4 residues coordinate Zn(2+): Cys901, Cys904, Cys921, and Cys924.

Belongs to the class-I aminoacyl-tRNA synthetase family. IleS type 1 subfamily. In terms of assembly, monomer. Zn(2+) is required as a cofactor.

Its subcellular location is the cytoplasm. The enzyme catalyses tRNA(Ile) + L-isoleucine + ATP = L-isoleucyl-tRNA(Ile) + AMP + diphosphate. Catalyzes the attachment of isoleucine to tRNA(Ile). As IleRS can inadvertently accommodate and process structurally similar amino acids such as valine, to avoid such errors it has two additional distinct tRNA(Ile)-dependent editing activities. One activity is designated as 'pretransfer' editing and involves the hydrolysis of activated Val-AMP. The other activity is designated 'posttransfer' editing and involves deacylation of mischarged Val-tRNA(Ile). This is Isoleucine--tRNA ligase from Yersinia pseudotuberculosis serotype O:1b (strain IP 31758).